Consider the following 369-residue polypeptide: Melanoma-associated antigen 10 (369 aa).

Residues 1–131 (MPRAPKRQRC…VLPDSESLPR (131 aa)) form a disordered region. The segment covering 39 to 62 (SSSTSTSSSFPSSFPSSSSSSSSS) has biased composition (low complexity). Composition is skewed to polar residues over residues 85 to 96 (QSAQIACSSPSV) and 107 to 121 (EGSSSQKEESPSTLQ). One can recognise an MAGE domain in the interval 134 to 333 (IDEKVTDLVQ…RSFPLWYEEA (200 aa)). The tract at residues 340–369 (RAQDRIATTDDTTAMASASSSATGSFSYPE) is disordered. Over residues 348–369 (TDDTTAMASASSSATGSFSYPE) the composition is skewed to low complexity.

Expressed in many tumors of several types, such as melanoma, head and neck squamous cell carcinoma, lung carcinoma and breast carcinoma, but not in normal tissues except for spermatogonia, spermatocytes and placenta.

It localises to the nucleus. Its function is as follows. Not known, though may play a role in embryonal development and tumor transformation or aspects of tumor progression. This Homo sapiens (Human) protein is Melanoma-associated antigen 10 (MAGEA10).